Consider the following 285-residue polypeptide: NAD kinase (285 aa).

Asp-68 serves as the catalytic Proton acceptor. Residues 68–69 (DG), 142–143 (ND), Arg-153, Lys-170, Asp-172, 183–188 (TAYNLS), and Gln-242 each bind NAD(+).

It belongs to the NAD kinase family. It depends on a divalent metal cation as a cofactor.

It is found in the cytoplasm. The enzyme catalyses NAD(+) + ATP = ADP + NADP(+) + H(+). Functionally, involved in the regulation of the intracellular balance of NAD and NADP, and is a key enzyme in the biosynthesis of NADP. Catalyzes specifically the phosphorylation on 2'-hydroxyl of the adenosine moiety of NAD to yield NADP. This Syntrophotalea carbinolica (strain DSM 2380 / NBRC 103641 / GraBd1) (Pelobacter carbinolicus) protein is NAD kinase.